Here is a 304-residue protein sequence, read N- to C-terminus: Lipid droplet-associated hydrolase (304 aa).

The Nucleophile role is filled by Ser-119. Catalysis depends on charge relay system residues Asp-250 and His-279.

Belongs to the AB hydrolase superfamily. LDAH family.

The protein resides in the lipid droplet. The enzyme catalyses a cholesterol ester + H2O = cholesterol + a fatty acid + H(+). In terms of biological role, probable serine lipid hydrolase associated with lipid droplets. Has low cholesterol esterase activity. Appears to lack triglyceride lipase activity. Involved in cholesterol and triglyceride homeostasis; stimulates cellular triglyceride accumulation and cellular cholesterol release. The protein is Lipid droplet-associated hydrolase of Dictyostelium discoideum (Social amoeba).